The primary structure comprises 163 residues: Large ribosomal subunit protein uL10 (163 aa).

This sequence belongs to the universal ribosomal protein uL10 family. Part of the ribosomal stalk of the 50S ribosomal subunit. The N-terminus interacts with L11 and the large rRNA to form the base of the stalk. The C-terminus forms an elongated spine to which L12 dimers bind in a sequential fashion forming a multimeric L10(L12)X complex.

Its function is as follows. Forms part of the ribosomal stalk, playing a central role in the interaction of the ribosome with GTP-bound translation factors. This chain is Large ribosomal subunit protein uL10 (rplJ), found in Pasteurella multocida (strain Pm70).